A 260-amino-acid chain; its full sequence is MKQDQLLEYLEHFTSVTDGDRLAELIGRFTLGMGYDYYRFALIIPMSMQRPKVVLFNQCPDSWVQAYTANHMLACDPIIQLARKQTLPIYWNRLDERARFLQEGSLDVMGLAAEFGLRNGISFPLHGAAGENGILSFITAERASSDLLLESSPILSWMSNYIFEAAIRIVRVSLREDDPQEALTDRETECLFWASEGKTSGEIACILGITERTVNYHLNQVTRKTGSMNRYQAIAKGVSSGILLPNLEQVVVTNFPKLMQ.

Residues 176-241 (EDDPQEALTD…QAIAKGVSSG (66 aa)) enclose the HTH luxR-type domain. A DNA-binding region (H-T-H motif) is located at residues 200–219 (SGEIACILGITERTVNYHLN).

It belongs to the autoinducer-regulated transcriptional regulatory protein family.

Functions as a BHL-responsive transcriptional regulator. This chain is Transcriptional activator protein AsaR, found in Aeromonas salmonicida.